A 101-amino-acid polypeptide reads, in one-letter code: MRKFETLLLLSPELAADAREALLTTLSGVVEREQGSMITADHWGMRDLAYPVRKQMRGYYVRLEYTAPGATVAELERIIRISDGIFKFVTVKLADAVEEVA.

This sequence belongs to the bacterial ribosomal protein bS6 family.

Functionally, binds together with bS18 to 16S ribosomal RNA. The protein is Small ribosomal subunit protein bS6 of Nitratidesulfovibrio vulgaris (strain ATCC 29579 / DSM 644 / CCUG 34227 / NCIMB 8303 / VKM B-1760 / Hildenborough) (Desulfovibrio vulgaris).